The chain runs to 357 residues: Glutamine synthetase root isozyme 1 (357 aa).

The GS beta-grasp domain maps to 19-99; it reads IIAEYIWIGG…VMCDCYTPQG (81 aa). The GS catalytic domain occupies 106-357; that stretch reads KRYSAAKVFS…AETTILWNGN (252 aa).

The protein belongs to the glutamine synthetase family. Homooctamer. Found mainly in the cortical tissues of seedling roots, and in the root tip.

It localises to the cytoplasm. It catalyses the reaction L-glutamate + NH4(+) + ATP = L-glutamine + ADP + phosphate + H(+). In terms of biological role, plays a role in the flow of nitrogen into nitrogenous organic compounds. The sequence is that of Glutamine synthetase root isozyme 1 (GLN6) from Zea mays (Maize).